The sequence spans 190 residues: uncharacterized protein (190 aa).

Positions 1-15 are cleaved as a signal peptide; the sequence is MKVFAYIALATVVAG.

The protein resides in the secreted. This is an uncharacterized protein from Arthroderma benhamiae (strain ATCC MYA-4681 / CBS 112371) (Trichophyton mentagrophytes).